Reading from the N-terminus, the 311-residue chain is D-alanine--D-alanine ligase (311 aa).

Residues 106 to 301 (KLLWRGAELP…FDELCWRILL (196 aa)) form the ATP-grasp domain. An ATP-binding site is contributed by 132–187 (IGSVGLPLMIKPAHEGSSIGMAKVERPEELEAARAEAARYDDLVLAERWIEGGEYT). Residues Asp255, Glu268, and Asn270 each coordinate Mg(2+).

Belongs to the D-alanine--D-alanine ligase family. Requires Mg(2+) as cofactor. Mn(2+) serves as cofactor.

The protein resides in the cytoplasm. It catalyses the reaction 2 D-alanine + ATP = D-alanyl-D-alanine + ADP + phosphate + H(+). The protein operates within cell wall biogenesis; peptidoglycan biosynthesis. Its function is as follows. Cell wall formation. This chain is D-alanine--D-alanine ligase, found in Alkalilimnicola ehrlichii (strain ATCC BAA-1101 / DSM 17681 / MLHE-1).